The primary structure comprises 704 residues: Arylphorin (704 aa).

An N-terminal signal peptide occupies residues 1-16 (MKIVLVLAGLIALVQS). N-linked (GlcNAc...) asparagine glycans are attached at residues Asn73, Asn212, and Asn360.

It belongs to the hemocyanin family. As to quaternary structure, homohexamer of two stacked trimers; disulfide-linked. Glycosylation at Asn-360 is required for proper folding.

The protein resides in the secreted. It localises to the extracellular space. Arylphorin is a larval storage protein (LSP) which may serve as a storage protein used primarily as a source of aromatic amino acids for protein synthesis during metamorphosis. It is a constituent of the sclerotizing system of the cuticle, and serves as a carrier for ecdysteroid hormone. The chain is Arylphorin from Antheraea pernyi (Chinese oak silk moth).